Here is a 610-residue protein sequence, read N- to C-terminus: Major facilitator superfamily multidrug transporter FLU1 (610 aa).

Residues N3 and N21 are each glycosylated (N-linked (GlcNAc...) asparagine). A compositionally biased stretch (polar residues) spans G47–T58. The disordered stretch occupies residues G47–K74. The next 11 helical transmembrane spans lie at I165 to F185, L209 to G229, K231 to A251, F262 to M282, I292 to F312, W323 to L343, A408 to E428, E437 to F457, L478 to T498, W507 to P527, and N530 to I550. The N-linked (GlcNAc...) asparagine glycan is linked to N568. Residues W573–Y593 traverse the membrane as a helical segment.

It belongs to the major facilitator superfamily. DHA1 family. Polyamines/proton antiporter (TC 2.A.1.2.16) subfamily.

The protein localises to the cell membrane. Functionally, major facilitator superfamily transporter that mediates resistance to structurally and functionally unrelated compounds including cycloheximide but also azoles such as fuconazole, ketoconazole and itraconazole. Also mediates efflux of histatin 5, a salivary human antimicrobial peptide, and is responsible for reduction of its toxicity in C.albicans. The polypeptide is Major facilitator superfamily multidrug transporter FLU1 (Candida albicans (strain SC5314 / ATCC MYA-2876) (Yeast)).